The chain runs to 255 residues: Malonyl-[acyl-carrier protein] O-methyltransferase (255 aa).

The protein belongs to the methyltransferase superfamily.

The catalysed reaction is malonyl-[ACP] + S-adenosyl-L-methionine = malonyl-[ACP] methyl ester + S-adenosyl-L-homocysteine. Its pathway is cofactor biosynthesis; biotin biosynthesis. Its function is as follows. Converts the free carboxyl group of a malonyl-thioester to its methyl ester by transfer of a methyl group from S-adenosyl-L-methionine (SAM). It allows to synthesize pimeloyl-ACP via the fatty acid synthetic pathway. The chain is Malonyl-[acyl-carrier protein] O-methyltransferase from Acinetobacter baylyi (strain ATCC 33305 / BD413 / ADP1).